The primary structure comprises 214 residues: Alpha-S1-casein (214 aa).

A signal peptide spans 1-15 (MKLLILTCLVAVALA). The segment at 59 to 91 (IGSESTEDQAMEDAKQMKAGSSSSSEEIVPNSA) is disordered. Phosphoserine is present on residues Ser-61, Ser-63, Ser-79, Ser-80, Ser-81, Ser-82, Ser-83, Ser-90, and Ser-130.

The protein belongs to the alpha-casein family. As to expression, mammary gland specific. Secreted in milk.

It is found in the secreted. In terms of biological role, important role in the capacity of milk to transport calcium phosphate. The polypeptide is Alpha-S1-casein (CSN1S1) (Capra hircus (Goat)).